A 234-amino-acid chain; its full sequence is MERTSKYAEAIDTASQPETVIRASSVTGQQGHLNSVDMPLVETWRPEGPRASQQNHILLSPEQEVSQSSNTSPTSESDPQAFLEASEFPQNQTKTSRVDPVHMEIDDWAAIDQPMADSAQPDFEDWGDLGDLMPEVLPESSGTSSGAATDNGTAADDENRCWDHGCNGKKFLNHSNLVRHRRENGSARPKFICPMCGAYFSRSTARNQHLEKKSCNRVRRYSNGRERPRLRVKD.

Disordered stretches follow at residues 45 to 99 and 118 to 154; these read RPEG…SRVD and SAQP…NGTA. Composition is skewed to low complexity over residues 66–77 and 140–154; these read SQSSNTSPTSES and SSGT…NGTA. The segment at 159 to 184 adopts a C2H2-type 1; degenerate zinc-finger fold; the sequence is NRCWDHGCNGKKFLNHSNLVRHRREN. The C2H2-type 2; degenerate zinc finger occupies 191 to 223; that stretch reads FICPMCGAYFSRSTARNQHLEKKSCNRVRRYSN.

It belongs to the GLI C2H2-type zinc-finger protein family.

The protein resides in the nucleus. In terms of biological role, transcription factor that probably regulates the expression of the gene cluster that mediates the biosynthesis of squalestatin S1 (SQS1, also known as zaragozic acid A), a heavily oxidized fungal polyketide that offers potent cholesterol lowering activity by targeting squalene synthase (SS). In Cochliobolus lunatus (Filamentous fungus), this protein is C2H2-type zinc-finger transcription factor clz7.